A 253-amino-acid chain; its full sequence is Indole-3-glycerol phosphate synthase (253 aa).

The protein belongs to the TrpC family.

It catalyses the reaction 1-(2-carboxyphenylamino)-1-deoxy-D-ribulose 5-phosphate + H(+) = (1S,2R)-1-C-(indol-3-yl)glycerol 3-phosphate + CO2 + H2O. The protein operates within amino-acid biosynthesis; L-tryptophan biosynthesis; L-tryptophan from chorismate: step 4/5. The chain is Indole-3-glycerol phosphate synthase from Bacillus cereus (strain B4264).